A 251-amino-acid polypeptide reads, in one-letter code: Flap endonuclease Xni (251 aa).

Asp-104 contributes to the Mg(2+) binding site. One can recognise a 5'-3' exonuclease domain in the interval 160-249 (VLPQQLPDYW…IDGNLQQLRL (90 aa)). 5 residues coordinate K(+): Leu-171, Ala-172, Pro-180, Val-182, and Ile-185. The tract at residues 184 to 189 (GIGPKS) is interaction with DNA.

It belongs to the Xni family. Mg(2+) is required as a cofactor. Requires K(+) as cofactor.

Has flap endonuclease activity. During DNA replication, flap endonucleases cleave the 5'-overhanging flap structure that is generated by displacement synthesis when DNA polymerase encounters the 5'-end of a downstream Okazaki fragment. The polypeptide is Flap endonuclease Xni (Citrobacter koseri (strain ATCC BAA-895 / CDC 4225-83 / SGSC4696)).